Here is a 179-residue protein sequence, read N- to C-terminus: Large ribosomal subunit protein uL5 (179 aa).

Belongs to the universal ribosomal protein uL5 family. As to quaternary structure, part of the 50S ribosomal subunit; part of the 5S rRNA/L5/L18/L25 subcomplex. Contacts the 5S rRNA and the P site tRNA. Forms a bridge to the 30S subunit in the 70S ribosome.

Functionally, this is one of the proteins that bind and probably mediate the attachment of the 5S RNA into the large ribosomal subunit, where it forms part of the central protuberance. In the 70S ribosome it contacts protein S13 of the 30S subunit (bridge B1b), connecting the 2 subunits; this bridge is implicated in subunit movement. Contacts the P site tRNA; the 5S rRNA and some of its associated proteins might help stabilize positioning of ribosome-bound tRNAs. This is Large ribosomal subunit protein uL5 from Pelobacter propionicus (strain DSM 2379 / NBRC 103807 / OttBd1).